A 74-amino-acid polypeptide reads, in one-letter code: Conotoxin MiEr93 (74 aa).

The N-terminal stretch at 1 to 22 is a signal peptide; sequence MKLTCVLIIAVLFLTAYQLATA. Positions 23–45 are excised as a propeptide; sequence ASYAKGKQKHRALRPADKHLRLT. Cystine bridges form between Cys-48-Cys-62, Cys-55-Cys-66, and Cys-61-Cys-73.

The protein belongs to the conotoxin O1 superfamily. Expressed by the venom duct.

The protein resides in the secreted. The polypeptide is Conotoxin MiEr93 (Conus miles (Soldier cone)).